The following is a 603-amino-acid chain: uncharacterized protein (603 aa).

The segment covering 496–513 has biased composition (acidic residues); the sequence is EEEDQEEDDTSDDDDQEK. 2 disordered regions span residues 496-536 and 549-568; these read EEED…GSLE and AVAEQDRKKTQKKHKIDTAQ. Polar residues predominate over residues 517–533; the sequence is NPQNNIGSLTRTPSSPG.

It belongs to the herpesviridae US22 family.

This is an uncharacterized protein from Human cytomegalovirus (strain AD169) (HHV-5).